Consider the following 82-residue polypeptide: Exodeoxyribonuclease 7 small subunit (82 aa).

The protein belongs to the XseB family. As to quaternary structure, heterooligomer composed of large and small subunits.

The protein resides in the cytoplasm. The enzyme catalyses Exonucleolytic cleavage in either 5'- to 3'- or 3'- to 5'-direction to yield nucleoside 5'-phosphates.. In terms of biological role, bidirectionally degrades single-stranded DNA into large acid-insoluble oligonucleotides, which are then degraded further into small acid-soluble oligonucleotides. The protein is Exodeoxyribonuclease 7 small subunit of Colwellia psychrerythraea (strain 34H / ATCC BAA-681) (Vibrio psychroerythus).